The following is a 322-amino-acid chain: Acetyl-coenzyme A carboxylase carboxyl transferase subunit alpha (322 aa).

A CoA carboxyltransferase C-terminal domain is found at 39-296 (DLTALKKQLI…HSKLVTELNY (258 aa)).

Belongs to the AccA family. As to quaternary structure, acetyl-CoA carboxylase is a heterohexamer composed of biotin carboxyl carrier protein (accB), biotin carboxylase (accC) and two subunits each of ACCase subunit alpha (accA) and ACCase subunit beta (accD).

Its subcellular location is the plastid. The protein localises to the chloroplast. The enzyme catalyses N(6)-carboxybiotinyl-L-lysyl-[protein] + acetyl-CoA = N(6)-biotinyl-L-lysyl-[protein] + malonyl-CoA. It participates in lipid metabolism; malonyl-CoA biosynthesis; malonyl-CoA from acetyl-CoA: step 1/1. Functionally, component of the acetyl coenzyme A carboxylase (ACC) complex. First, biotin carboxylase catalyzes the carboxylation of biotin on its carrier protein (BCCP) and then the CO(2) group is transferred by the carboxyltransferase to acetyl-CoA to form malonyl-CoA. This chain is Acetyl-coenzyme A carboxylase carboxyl transferase subunit alpha, found in Antithamnion sp. (Red alga).